Reading from the N-terminus, the 190-residue chain is Threonylcarbamoyl-AMP synthase (190 aa).

A YrdC-like domain is found at 7 to 190 (SQDVASLVIA…ALSGELIRQG (184 aa)).

The protein belongs to the SUA5 family. TsaC subfamily.

Its subcellular location is the cytoplasm. The enzyme catalyses L-threonine + hydrogencarbonate + ATP = L-threonylcarbamoyladenylate + diphosphate + H2O. In terms of biological role, required for the formation of a threonylcarbamoyl group on adenosine at position 37 (t(6)A37) in tRNAs that read codons beginning with adenine. Catalyzes the conversion of L-threonine, HCO(3)(-)/CO(2) and ATP to give threonylcarbamoyl-AMP (TC-AMP) as the acyladenylate intermediate, with the release of diphosphate. The chain is Threonylcarbamoyl-AMP synthase from Sodalis glossinidius (strain morsitans).